The following is a 154-amino-acid chain: Deoxyuridine 5'-triphosphate nucleotidohydrolase (154 aa).

Residues 64–66, N77, 81–83, and K91 each bind substrate; these read RSG and TID.

This sequence belongs to the dUTPase family. As to quaternary structure, homotrimer. Mg(2+) serves as cofactor.

The catalysed reaction is dUTP + H2O = dUMP + diphosphate + H(+). The protein operates within pyrimidine metabolism; dUMP biosynthesis; dUMP from dCTP (dUTP route): step 2/2. Its function is as follows. This enzyme is involved in nucleotide metabolism: it produces dUMP, the immediate precursor of thymidine nucleotides and it decreases the intracellular concentration of dUTP so that uracil cannot be incorporated into DNA. This chain is Deoxyuridine 5'-triphosphate nucleotidohydrolase, found in Mycobacterium avium (strain 104).